The primary structure comprises 218 residues: Superoxide dismutase [Mn], mitochondrial (218 aa).

The transit peptide at 1–21 (MLRFLSKNSVAAIRNVSIARG) directs the protein to the mitochondrion. Residues His50 and His96 each coordinate Mn(2+). Ser129 carries the phosphoserine modification. Mn(2+)-binding residues include Asp181 and His185.

The protein belongs to the iron/manganese superoxide dismutase family. Homodimer. It depends on Mn(2+) as a cofactor.

Its subcellular location is the mitochondrion matrix. The catalysed reaction is 2 superoxide + 2 H(+) = H2O2 + O2. In terms of biological role, destroys superoxide anion radicals which are normally produced within the cells and which are toxic to biological systems. The protein is Superoxide dismutase [Mn], mitochondrial (sod2) of Schizosaccharomyces pombe (strain 972 / ATCC 24843) (Fission yeast).